A 168-amino-acid chain; its full sequence is Large ribosomal subunit protein bL17 (168 aa).

Over residues 121–146 (AEAEGGEEKAEQKTEKKAAKAKEPKA) the composition is skewed to basic and acidic residues. The disordered stretch occupies residues 121-168 (AEAEGGEEKAEQKTEKKAAKAKEPKAAKAPKKAAAKPKAKAEKKGAEE). Residues 148–158 (KAPKKAAAKPK) show a composition bias toward basic residues. Basic and acidic residues predominate over residues 159-168 (AKAEKKGAEE).

Belongs to the bacterial ribosomal protein bL17 family. As to quaternary structure, part of the 50S ribosomal subunit. Contacts protein L32.

The protein is Large ribosomal subunit protein bL17 of Anaeromyxobacter sp. (strain Fw109-5).